The chain runs to 148 residues: Putative pre-16S rRNA nuclease (148 aa).

Belongs to the YqgF nuclease family.

The protein localises to the cytoplasm. Functionally, could be a nuclease involved in processing of the 5'-end of pre-16S rRNA. This is Putative pre-16S rRNA nuclease from Chlamydia trachomatis serovar L2 (strain ATCC VR-902B / DSM 19102 / 434/Bu).